A 555-amino-acid chain; its full sequence is Potassium-transporting ATPase potassium-binding subunit (555 aa).

10 helical membrane passes run 2–22 (IWVA…PTGI), 60–80 (QYAL…YFIF), 130–150 (IGIT…VMAF), 173–193 (VFLP…VPQT), 246–266 (MSNI…PFTY), 278–298 (ILFV…TTSE), 374–394 (AGFV…GLMV), 412–432 (LIAV…ALAL), 483–503 (LVMF…AASL), and 525–545 (GIFI…MLVL).

This sequence belongs to the KdpA family. In terms of assembly, the system is composed of three essential subunits: KdpA, KdpB and KdpC.

It is found in the cell membrane. In terms of biological role, part of the high-affinity ATP-driven potassium transport (or Kdp) system, which catalyzes the hydrolysis of ATP coupled with the electrogenic transport of potassium into the cytoplasm. This subunit binds the extracellular potassium ions and delivers the ions to the membrane domain of KdpB through an intramembrane tunnel. This chain is Potassium-transporting ATPase potassium-binding subunit, found in Bacillus anthracis (strain A0248).